The following is a 337-amino-acid chain: Glyceraldehyde-3-phosphate dehydrogenase (337 aa).

Residues 12–13 (RI), Asp-34, and Arg-79 contribute to the NAD(+) site. D-glyceraldehyde 3-phosphate-binding positions include 150 to 152 (SCT), Thr-181, 210 to 211 (TG), and Arg-233. The Nucleophile role is filled by Cys-151. Asn-315 provides a ligand contact to NAD(+).

The protein belongs to the glyceraldehyde-3-phosphate dehydrogenase family. Homotetramer.

It is found in the cytoplasm. The catalysed reaction is D-glyceraldehyde 3-phosphate + phosphate + NAD(+) = (2R)-3-phospho-glyceroyl phosphate + NADH + H(+). It participates in carbohydrate degradation; glycolysis; pyruvate from D-glyceraldehyde 3-phosphate: step 1/5. The chain is Glyceraldehyde-3-phosphate dehydrogenase (GPD-1) from Claviceps purpurea (strain 20.1) (Ergot fungus).